The following is a 67-amino-acid chain: Phycobilisome 7.8 kDa linker polypeptide, allophycocyanin-associated, core (67 aa).

In terms of domain architecture, CpcD-like spans 1 to 56 (MRVFKVTACVPSQTRIRTQRELQNTYFTKLVPYDNWFREQQRIMKMGGKIVKVELA).

This sequence belongs to the phycobilisome linker protein family.

It is found in the cellular thylakoid membrane. In terms of biological role, rod linker protein, associated with allophycocyanin. Linker polypeptides determine the state of aggregation and the location of the disk-shaped phycobiliprotein units within the phycobilisome and modulate their spectroscopic properties in order to mediate a directed and optimal energy transfer. The protein is Phycobilisome 7.8 kDa linker polypeptide, allophycocyanin-associated, core (apcC) of Arthrospira platensis (Spirulina platensis).